The sequence spans 1178 residues: Autophagy-related protein 11 (1178 aa).

Coiled coils occupy residues 538–572 (EDEE…IKET) and 696–850 (SQAN…SYAE).

Belongs to the ATG11 family. Homodimer and potential homooligomers. Interacts with ATG1 kinase. Interacts with the ATG19 cargo protein transporter. Interacts with the ATG34 cargo protein transporter. Interacts with ATG9. Interacts with ATG17. Interacts with ATG20. Interacts with ATG30. Interacts with ATG32; to recruit ATG11 to mitochondria. Interacts with ATG36. Interacts with YPT1. Acetylated by the NuA4 histone acetyltransferase (HAT) complex.

Its subcellular location is the preautophagosomal structure membrane. It is found in the vacuole membrane. Involved in cytoplasm to vacuole transport (Cvt), pexophagy, mitophagy and nucleophagy. Recruits mitochondria for their selective degradation via autophagy (mitophagy) during starvation, through its interaction with ATG32. Works as scaffold proteins that recruit ATG proteins to the pre-autophagosome (PAS), the site of vesicle/autophagosome formation. Required for ATG9 anterograde transport from the mitochondria to the PAS. Also recruits the ATG19-prAPE1 complex to the PAS. Required for the Cvt vesicles completion. Plays a significant role in life span extension. This Saccharomyces cerevisiae (strain ATCC 204508 / S288c) (Baker's yeast) protein is Autophagy-related protein 11 (ATG11).